The chain runs to 203 residues: Small ribosomal subunit protein uS4 (203 aa).

Positions 93-156 (RRLDNVVYRL…LKVPAILEAV (64 aa)) constitute an S4 RNA-binding domain.

It belongs to the universal ribosomal protein uS4 family. In terms of assembly, part of the 30S ribosomal subunit. Contacts protein S5. The interaction surface between S4 and S5 is involved in control of translational fidelity.

Its function is as follows. One of the primary rRNA binding proteins, it binds directly to 16S rRNA where it nucleates assembly of the body of the 30S subunit. In terms of biological role, with S5 and S12 plays an important role in translational accuracy. In Streptococcus pneumoniae serotype 2 (strain D39 / NCTC 7466), this protein is Small ribosomal subunit protein uS4.